We begin with the raw amino-acid sequence, 105 residues long: Pyrimidine/purine nucleoside phosphorylase (105 aa).

It belongs to the nucleoside phosphorylase PpnP family.

It carries out the reaction a purine D-ribonucleoside + phosphate = a purine nucleobase + alpha-D-ribose 1-phosphate. The enzyme catalyses adenosine + phosphate = alpha-D-ribose 1-phosphate + adenine. The catalysed reaction is cytidine + phosphate = cytosine + alpha-D-ribose 1-phosphate. It catalyses the reaction guanosine + phosphate = alpha-D-ribose 1-phosphate + guanine. It carries out the reaction inosine + phosphate = alpha-D-ribose 1-phosphate + hypoxanthine. The enzyme catalyses thymidine + phosphate = 2-deoxy-alpha-D-ribose 1-phosphate + thymine. The catalysed reaction is uridine + phosphate = alpha-D-ribose 1-phosphate + uracil. It catalyses the reaction xanthosine + phosphate = alpha-D-ribose 1-phosphate + xanthine. Functionally, catalyzes the phosphorolysis of diverse nucleosides, yielding D-ribose 1-phosphate and the respective free bases. Can use uridine, adenosine, guanosine, cytidine, thymidine, inosine and xanthosine as substrates. Also catalyzes the reverse reactions. The protein is Pyrimidine/purine nucleoside phosphorylase of Clostridioides difficile (strain 630) (Peptoclostridium difficile).